The chain runs to 500 residues: Protein PIGMENT DEFECTIVE 338, chloroplastic (500 aa).

The N-terminal 63 residues, 1–63 (MQTLLCQPCK…FAFRGFSICR (63 aa)), are a transit peptide targeting the chloroplast. 3 consecutive S1 motif domains span residues 156-265 (KPGD…LSSR), 283-351 (NEPI…LSEK), and 362-431 (GTLL…LSIA).

This sequence belongs to the bacterial ribosomal protein bS1 family. Interacts with CRP1 and PRFB3. As to expression, present in leaves (at protein level). Confined to leaf chlorenchyma cells.

It localises to the plastid. The protein localises to the chloroplast. Its function is as follows. RNA-binding protein that acts as an RNA chaperone to remodel RNA structure and activates their translation. Required for seed pigmentation. Necessary for chloroplast development and subsequent photosynthetic electron flow, as well as for non-photochemical quenching (NPQ). Rubisco regulatory factor which regulates the concerted biogenesis of NDH, PSI (including PsaA, PsaB, PsaD, PsaF, PsaL, PsaG, PsaK and NdhH) and Cytb(6)f (including PetA, PetB, PetC and PetD) complexes. Binds specifically to and involved in the post-transcriptional regulation of plastid-encoded mRNAs (e.g. rbcL, petA, petB, petD and Ycf1), thus modulating expression, cellular localization/compartmentalization, and photosynthetic function. This Arabidopsis thaliana (Mouse-ear cress) protein is Protein PIGMENT DEFECTIVE 338, chloroplastic.